Consider the following 283-residue polypeptide: Nucleotide-binding protein THEYE_A0235 (283 aa).

An ATP-binding site is contributed by 12 to 19 (GLSGGGKT). Residue 62–65 (DIRV) participates in GTP binding.

The protein belongs to the RapZ-like family.

Functionally, displays ATPase and GTPase activities. In Thermodesulfovibrio yellowstonii (strain ATCC 51303 / DSM 11347 / YP87), this protein is Nucleotide-binding protein THEYE_A0235.